Consider the following 622-residue polypeptide: Sodium-dependent serotonin transporter (622 aa).

Residues 1-53 are disordered; it reads MDRSGSSDFAGAAATTGRSNPAPWSDDKESPNNEDDSNEDDGDHTTPAKVTDP. Over 1–82 the chain is Cytoplasmic; the sequence is MDRSGSSDFA…TRETWGQKAE (82 aa). Acidic residues predominate over residues 32-42; it reads NNEDDSNEDDG. Helical transmembrane passes span 83 to 103, 111 to 130, and 155 to 175; these read FLLAVIGFAVDLGNVWRFPYI, AFLVPYCLFLIFGGLPLFYM, and GVGYAICLIDIYMGMYYNTII. The Na(+) site is built by Gly-89, Ala-91, Val-92, and Asn-96. At 176–244 the chain is on the extracellular side; sequence GWAVYYLFAS…NGLDFMGPVK (69 aa). Residues Cys-195 and Cys-204 are joined by a disulfide bond. Asn-211 carries an N-linked (GlcNAc...) asparagine glycan. The next 5 helical transmembrane spans lie at 245–263, 272–289, 325–342, 354–375, and 408–427; these read PTLALCVFGVFVLVYFSLW, VVWVTALAPYVVLIILLV, IFFSLGPGFGTLLALSSY, LITSSINCLTSFLAGFVIFSVL, and MSGSVFWSIIFFLMLITLGL. Residues Ser-328, Asn-360, Leu-425, Asp-428, and Ser-429 each contribute to the Na(+) site. The next 4 helical transmembrane spans lie at 455 to 473, 489 to 509, 530 to 549, and 568 to 586; these read LFVLLLLAFIFLCALPTMT, GLAILFVVFVEAAGVFWFYGV, ICWTYISPVFLLTIFIFSIM, and VGWAVTCSSVLCIPMYIIY. Topologically, residues 587–622 are cytoplasmic; the sequence is KFFFASKGGCRQRLQESFQPEDNCGSVVPGQQGTSV.

The protein belongs to the sodium:neurotransmitter symporter (SNF) (TC 2.A.22) family. As to expression, expression is specific to cell bodies in the ventral ganglion of the embryonic and larval nervous system.

Its subcellular location is the cell membrane. Functionally, terminates the action of serotonin by its high affinity sodium-dependent reuptake into presynaptic terminals. This is Sodium-dependent serotonin transporter (SerT) from Drosophila melanogaster (Fruit fly).